Here is a 113-residue protein sequence, read N- to C-terminus: MSEMPTPVNFTEAAASKVSGLIQDEGNPELKLRVYITGGGCSGFQYGFTFDESQAEDDTVVEKDGVKLMIDPMSFQYLMGAKIDYLEDLQGARFVIENPNASTTCGCGSSFGV.

Residues Cys41, Cys105, and Cys107 each coordinate iron-sulfur cluster.

Belongs to the HesB/IscA family. In terms of assembly, homodimer. Iron-sulfur cluster serves as cofactor.

Functionally, required for insertion of 4Fe-4S clusters for at least IspG. This Hydrogenovibrio crunogenus (strain DSM 25203 / XCL-2) (Thiomicrospira crunogena) protein is Iron-sulfur cluster insertion protein ErpA.